The primary structure comprises 121 residues: Fumarate reductase subunit D (121 aa).

3 helical membrane passes run 22-42, 57-77, and 100-120; these read GVWF…LLPL, AFVS…LPMW, and YACY…VIQL.

The protein belongs to the FrdD family. Part of an enzyme complex containing four subunits: a flavoprotein (FrdA), an iron-sulfur protein (FrdB), and two hydrophobic anchor proteins (FrdC and FrdD).

It localises to the cell inner membrane. Functionally, anchors the catalytic components of the fumarate reductase complex to the cell membrane, binds quinones. In Shewanella putrefaciens (strain CN-32 / ATCC BAA-453), this protein is Fumarate reductase subunit D.